Here is a 252-residue protein sequence, read N- to C-terminus: Hydrolase phiM (252 aa).

S126 serves as the catalytic Charge relay system.

The protein belongs to the LovG family.

Its pathway is secondary metabolite biosynthesis. Functionally, hydrolase; part of the gene cluster that mediates the biosynthesis of the antihypercholesterolemic agents phomoidrides which are dimeric anhydrides. Within the pathway, phiM releases the C12-fatty acyl chain from phiA. The pathway begins with the highly reducing polyketide synthase tstA that catalyzes the formation of a C12-fatty acyl-ACP, starting from one acetate and 5 malonate units. The hydrolase tstM is involved in the release of the C12-fatty acyl chain from phiA. The alkylcitrate synthase (ACS) tstJ and the alkylcitrate dehydratase (ACDH) tstI then give rise to decarboxylated monomeric anhydrides by coupling the C12-fatty acyl chain with oxalacetic acid. The cyclase tstC is responsible for the dimerization of the monomeric anhydrides which leads to the production of prephomoidride that contains the characteristic bicyclo[4.3.1]deca-1,6-diene system of phomoidrides. Iterative oxidation catalyzed by the alpha-ketoglutarate-dependent dioxygenase tstK produced then phomoidride A. Finally, the methyltransferase tstE converts phomoidride A to phomoidride B via an acetalization reaction. The phosphatidylethanolamine-binding protein tstB and tstN are not essential for dimerization and their functions have still to be determined. The protein is Hydrolase phiM of Talaromyces stipitatus (strain ATCC 10500 / CBS 375.48 / QM 6759 / NRRL 1006) (Penicillium stipitatum).